We begin with the raw amino-acid sequence, 176 residues long: Cell division protein ZapC (176 aa).

This sequence belongs to the ZapC family. Interacts directly with FtsZ.

The protein resides in the cytoplasm. Functionally, contributes to the efficiency of the cell division process by stabilizing the polymeric form of the cell division protein FtsZ. Acts by promoting interactions between FtsZ protofilaments and suppressing the GTPase activity of FtsZ. This is Cell division protein ZapC from Pseudoalteromonas translucida (strain TAC 125).